The primary structure comprises 289 residues: 4-diphosphocytidyl-2-C-methyl-D-erythritol kinase (289 aa).

Lys-11 is a catalytic residue. Position 93 to 103 (Pro-93 to Ala-103) interacts with ATP. The active site involves Asp-135.

The protein belongs to the GHMP kinase family. IspE subfamily.

The enzyme catalyses 4-CDP-2-C-methyl-D-erythritol + ATP = 4-CDP-2-C-methyl-D-erythritol 2-phosphate + ADP + H(+). It functions in the pathway isoprenoid biosynthesis; isopentenyl diphosphate biosynthesis via DXP pathway; isopentenyl diphosphate from 1-deoxy-D-xylulose 5-phosphate: step 3/6. Functionally, catalyzes the phosphorylation of the position 2 hydroxy group of 4-diphosphocytidyl-2C-methyl-D-erythritol. The protein is 4-diphosphocytidyl-2-C-methyl-D-erythritol kinase of Thermoanaerobacter pseudethanolicus (strain ATCC 33223 / 39E) (Clostridium thermohydrosulfuricum).